A 638-amino-acid polypeptide reads, in one-letter code: Golgi integral membrane protein 4 (638 aa).

Residues 1–12 are Cytoplasmic-facing; that stretch reads MGNGMCSRRQKR. Residues 13–33 form a helical; Signal-anchor for type II membrane protein membrane-spanning segment; it reads IFQALACLAVAIGFVYGAMLN. Residues 34 to 638 are Lumenal-facing; that stretch reads YHLQNDLKKA…GVKNKRRAEM (605 aa). Golgi targeting stretches follow at residues 38-107 and 176-220; these read NDLK…RQDS and YNLR…SSLR. Residues 66 to 216 are a coiled coil; the sequence is EHRSRLEKSL…VQLKKALNKM (151 aa). The tract at residues 80–175 is endosome targeting; sequence LEHKKAKEDF…QEHSKLKESI (96 aa). Disordered stretches follow at residues 217–245, 280–415, and 455–638; these read SSLRQPEKDTVPIGRNNSPTIAPTQEHAT, RVKT…QQDL, and KQAE…RAEM. Composition is skewed to basic and acidic residues over residues 301–316 and 323–332; these read ATEHPVEVEEEHKKEL and QVGKPERLVE. Residues 348-361 are compositionally biased toward acidic residues; the sequence is EDDALEGNNEEQKE. 3 stretches are compositionally biased toward basic and acidic residues: residues 402–414, 455–467, and 510–521; these read QMEEARHLKEQQD, KQAEYENVDHDIV, and AESREGQEKAAA. 2 stretches are compositionally biased toward acidic residues: residues 534 to 553 and 577 to 593; these read GEDEFEEAEQEREENLPDEN and QQEDNIDQQYQEEEEEE. Positions 594 to 615 are enriched in basic and acidic residues; the sequence is RQIGAEREPDAQQEENKERNEE. A compositionally biased stretch (acidic residues) spans 616–626; the sequence is NYEEEEEEEDG.

The protein belongs to the GOLIM4 family.

The protein resides in the golgi apparatus. It localises to the golgi stack membrane. The protein localises to the endosome membrane. May play a role in endosome to Golgi protein trafficking. This chain is Golgi integral membrane protein 4 (golim4), found in Xenopus tropicalis (Western clawed frog).